Reading from the N-terminus, the 739-residue chain is Potassium transporter 26 (739 aa).

Topologically, residues methionine 1–serine 81 are cytoplasmic. The helical transmembrane segment at leucine 82 to leucine 102 threads the bilayer. Over aspartate 103–glycine 112 the chain is Extracellular. The chain crosses the membrane as a helical span at residues isoleucine 113–valine 133. Over leucine 134 to glutamine 198 the chain is Cytoplasmic. Residues alanine 199 to threonine 219 form a helical membrane-spanning segment. Over proline 220–serine 236 the chain is Extracellular. Residues serine 237 to phenylalanine 257 traverse the membrane as a helical segment. The Cytoplasmic portion of the chain corresponds to glutamine 258 to threonine 268. Residues phenylalanine 269–isoleucine 289 form a helical membrane-spanning segment. Residues lysine 290–threonine 318 are Extracellular-facing. A helical membrane pass occupies residues leucine 319–phenylalanine 339. The Cytoplasmic segment spans residues asparagine 340–alanine 347. Residues phenylalanine 348–valine 368 form a helical membrane-spanning segment. At lysine 369 to proline 385 the chain is on the extracellular side. Residues leucine 386–isoleucine 406 traverse the membrane as a helical segment. Topologically, residues serine 407–glutamine 437 are cytoplasmic. Residues valine 438–phenylalanine 458 traverse the membrane as a helical segment. Residues lysine 459–glycine 469 are Extracellular-facing. The helical transmembrane segment at valine 470–isoleucine 490 threads the bilayer. Residues tryptophan 491–asparagine 494 are Cytoplasmic-facing. A helical membrane pass occupies residues isoleucine 495 to serine 515. Residues leucine 516 to lysine 519 are Extracellular-facing. Residues isoleucine 520–serine 540 form a helical membrane-spanning segment. The Cytoplasmic segment spans residues tryptophan 541 to isoleucine 739.

The protein belongs to the HAK/KUP transporter (TC 2.A.72.3) family.

It is found in the membrane. Functionally, high-affinity potassium transporter. The sequence is that of Potassium transporter 26 (HAK26) from Oryza sativa subsp. japonica (Rice).